The following is an 80-amino-acid chain: Progonadoliberin-1 (80 aa).

The signal sequence occupies residues 1–21 (MGIKRALWWMVVCVVVLQVSA). Position 22 is a pyrrolidone carboxylic acid (Gln22). Glycine amide is present on Gly31.

The protein belongs to the GnRH family.

Its subcellular location is the secreted. Functionally, stimulates the secretion of gonadotropins. This is Progonadoliberin-1 (gnrh1) from Clarias gariepinus (North African catfish).